A 360-amino-acid chain; its full sequence is Dehydrogenase mokE (360 aa).

NADP(+) is bound at residue 50-53 (SDTK). 134–141 (AGISTAGL) contacts substrate. NADP(+) contacts are provided by residues 173–176 (STAT), 196–199 (SPHN), Tyr-214, 261–262 (LN), and Thr-279. 281-285 (GPTIF) contacts substrate. 350 to 351 (LS) contacts NADP(+).

Belongs to the zinc-containing alcohol dehydrogenase family. In terms of assembly, monomer.

It participates in polyketide biosynthesis; lovastatin biosynthesis. In terms of biological role, dehydrogenase; part of the gene cluster that mediates the biosynthesis of monakolin K, also known as lovastatin, and which acts as a potent competitive inhibitor of HMG-CoA reductase. Monakolin K biosynthesis is performed in two stages. The first stage is catalyzed by the nonaketide synthase mokA, which belongs to type I polyketide synthases and catalyzes the iterative nine-step formation of the polyketide. This PKS stage is completed by the action of dehydrogenase mokE, which catalyzes the NADPH-dependent reduction of the unsaturated tetra-, penta- and heptaketide intermediates that arise during the mokA-mediated biosynthesis of the nonaketide chain and leads to dihydromonacolin L. Covalently bound dihydromonacolin L is released from mokA by the mokD esterase. Conversion of dihydromonacolin L into monacolin L and then monacolin J is subsequently performed with the participation of molecular oxygen and P450 monoogygenase mokC. Finally, mokF performs the conversion of monacoline J to monacoline K through the addition of the side-chain diketide moiety (2R)-2-methylbutanoate produced by the diketide synthase mokB. The chain is Dehydrogenase mokE from Monascus pilosus (Red mold).